The following is a 258-amino-acid chain: 4-hydroxy-tetrahydrodipicolinate reductase (258 aa).

Residues 8–13 (GVTGRM), 93–95 (GTT), and 117–120 (AANF) each bind NAD(+). His-149 serves as the catalytic Proton donor/acceptor. His-150 contacts (S)-2,3,4,5-tetrahydrodipicolinate. Lys-153 functions as the Proton donor in the catalytic mechanism. 159–160 (GT) provides a ligand contact to (S)-2,3,4,5-tetrahydrodipicolinate.

Belongs to the DapB family.

The protein localises to the cytoplasm. The catalysed reaction is (S)-2,3,4,5-tetrahydrodipicolinate + NAD(+) + H2O = (2S,4S)-4-hydroxy-2,3,4,5-tetrahydrodipicolinate + NADH + H(+). The enzyme catalyses (S)-2,3,4,5-tetrahydrodipicolinate + NADP(+) + H2O = (2S,4S)-4-hydroxy-2,3,4,5-tetrahydrodipicolinate + NADPH + H(+). Its pathway is amino-acid biosynthesis; L-lysine biosynthesis via DAP pathway; (S)-tetrahydrodipicolinate from L-aspartate: step 4/4. Catalyzes the conversion of 4-hydroxy-tetrahydrodipicolinate (HTPA) to tetrahydrodipicolinate. This is 4-hydroxy-tetrahydrodipicolinate reductase from Thermomicrobium roseum (strain ATCC 27502 / DSM 5159 / P-2).